The following is a 156-amino-acid chain: 17.7 kDa class II heat shock protein (156 aa).

The 118-residue stretch at 39-156 (DAKAMAATPA…KPKTIQVQVA (118 aa)) folds into the sHSP domain.

The protein belongs to the small heat shock protein (HSP20) family. As to quaternary structure, may form oligomeric structures.

The protein localises to the cytoplasm. In Arabidopsis thaliana (Mouse-ear cress), this protein is 17.7 kDa class II heat shock protein (HSP17.7).